Reading from the N-terminus, the 295-residue chain is MKFTKGHGTQNDFVVLPDVHIKRDLSVAAVQALCDRQRGLGADGVLRVTTVGAALEGGVLAEKPAGVSSEDWFMDYRNADGSIAEMCGNGVRVFAHYLRSVGLEHRDEFVVASLAGPRPVRINSWSQLTADVTVDMGPVKEFGAGEAIVGGRRFSGLAIDVGNPHLACVDAVLTTEQLRILDVGAPVTFDEQLFPDGVNVEVLTAPSAGPANTVHMRVHERGVGETRSCGTGTVAAAYAALRHIGQRTGEVVVNIPGGQVRVTVTGESSFLRGPSMLLADGEISDEWWGGIGACG.

Positions 11 and 78 each coordinate substrate. Cys-87 acts as the Proton donor in catalysis. Residues 88–89, Asn-163, Asn-199, and 220–221 contribute to the substrate site; these read GN and ER. Residue Cys-229 is the Proton acceptor of the active site. 230 to 231 serves as a coordination point for substrate; it reads GT.

It belongs to the diaminopimelate epimerase family. As to quaternary structure, homodimer.

The protein resides in the cytoplasm. It catalyses the reaction (2S,6S)-2,6-diaminopimelate = meso-2,6-diaminopimelate. It participates in amino-acid biosynthesis; L-lysine biosynthesis via DAP pathway; DL-2,6-diaminopimelate from LL-2,6-diaminopimelate: step 1/1. Catalyzes the stereoinversion of LL-2,6-diaminopimelate (L,L-DAP) to meso-diaminopimelate (meso-DAP), a precursor of L-lysine and an essential component of the bacterial peptidoglycan. In Mycobacteroides abscessus (strain ATCC 19977 / DSM 44196 / CCUG 20993 / CIP 104536 / JCM 13569 / NCTC 13031 / TMC 1543 / L948) (Mycobacterium abscessus), this protein is Diaminopimelate epimerase.